Consider the following 414-residue polypeptide: GLABROUS1 enhancer-binding protein-like 3 (414 aa).

Disordered stretches follow at residues 36-57 and 167-191; these read QLRT…LSSS and QAKD…DRDV. Over residues 38 to 50 the composition is skewed to low complexity; it reads RTTTTRTTTTRTT. The non-canonical leucine-zipper stretch occupies residues 382–403; the sequence is LINEWKALFVDEQRLCVKKLTF.

It belongs to the GeBP family. Homo- and heterodimers. Interacts with GEBP, GPL1 and GPL2. Interacts with GEBP. As to expression, expressed in the apical meristem and young leaf primordia. Detected in the vascular tissues of rosette leaves, in primary and secondary roots and at the base of flowers and siliques.

It localises to the nucleus. Probable transcription factor. Involved in stress responses. Plays a repressive role in cell expansion by counteracting the positive role of CPR5 in this process, but does not regulate cell proliferation or endoreduplication. In Arabidopsis thaliana (Mouse-ear cress), this protein is GLABROUS1 enhancer-binding protein-like 3.